A 250-amino-acid polypeptide reads, in one-letter code: NADH-quinone oxidoreductase subunit C (250 aa).

Disordered stretches follow at residues 1-33 (MSDD…PTGE) and 228-250 (LGGV…RSYN).

The protein belongs to the complex I 30 kDa subunit family. In terms of assembly, NDH-1 is composed of 14 different subunits. Subunits NuoB, C, D, E, F, and G constitute the peripheral sector of the complex.

It localises to the cell membrane. The enzyme catalyses a quinone + NADH + 5 H(+)(in) = a quinol + NAD(+) + 4 H(+)(out). Its function is as follows. NDH-1 shuttles electrons from NADH, via FMN and iron-sulfur (Fe-S) centers, to quinones in the respiratory chain. The immediate electron acceptor for the enzyme in this species is believed to be a menaquinone. Couples the redox reaction to proton translocation (for every two electrons transferred, four hydrogen ions are translocated across the cytoplasmic membrane), and thus conserves the redox energy in a proton gradient. The polypeptide is NADH-quinone oxidoreductase subunit C (Nocardioides sp. (strain ATCC BAA-499 / JS614)).